The following is a 359-amino-acid chain: UDP-N-acetylglucosamine--N-acetylmuramyl-(pentapeptide) pyrophosphoryl-undecaprenol N-acetylglucosamine transferase (359 aa).

UDP-N-acetyl-alpha-D-glucosamine-binding positions include 15–17, Asn127, Arg166, Ser191, Ile245, 264–269, and Gln290; these read TGG and ALTVSE.

The protein belongs to the glycosyltransferase 28 family. MurG subfamily.

It localises to the cell inner membrane. It carries out the reaction di-trans,octa-cis-undecaprenyl diphospho-N-acetyl-alpha-D-muramoyl-L-alanyl-D-glutamyl-meso-2,6-diaminopimeloyl-D-alanyl-D-alanine + UDP-N-acetyl-alpha-D-glucosamine = di-trans,octa-cis-undecaprenyl diphospho-[N-acetyl-alpha-D-glucosaminyl-(1-&gt;4)]-N-acetyl-alpha-D-muramoyl-L-alanyl-D-glutamyl-meso-2,6-diaminopimeloyl-D-alanyl-D-alanine + UDP + H(+). It functions in the pathway cell wall biogenesis; peptidoglycan biosynthesis. In terms of biological role, cell wall formation. Catalyzes the transfer of a GlcNAc subunit on undecaprenyl-pyrophosphoryl-MurNAc-pentapeptide (lipid intermediate I) to form undecaprenyl-pyrophosphoryl-MurNAc-(pentapeptide)GlcNAc (lipid intermediate II). This chain is UDP-N-acetylglucosamine--N-acetylmuramyl-(pentapeptide) pyrophosphoryl-undecaprenol N-acetylglucosamine transferase, found in Pseudomonas putida (strain ATCC 700007 / DSM 6899 / JCM 31910 / BCRC 17059 / LMG 24140 / F1).